A 1735-amino-acid polypeptide reads, in one-letter code: Glutamine and serine-rich protein 1 (1735 aa).

M1 carries the N-acetylmethionine modification. Positions 267–297 (AIPSSGYPPSTTKIKSCSTEQPLTSTKTPKP) are enriched in polar residues. 4 disordered regions span residues 267–301 (AIPS…QSII), 414–440 (TRDL…VSQT), 479–518 (SRAQ…FLPA), and 533–561 (LQNN…SKQE). Residues 417 to 440 (LSSVSQSQSYSSGHSQGLSPVSQT) show a composition bias toward low complexity. Residues S586, S615, and S886 each carry the phosphoserine modification. T949 is subject to Phosphothreonine. The segment at 964–1033 (GPSHEVQEQS…EFTLGGDDSG (70 aa)) is disordered. Positions 971-985 (EQSSGPFKKQSATNL) are enriched in polar residues. Position 987 is a phosphoserine (S987). Residues 997 to 1024 (STLNNNRNQEFVSSSRSISGENATSESE) are compositionally biased toward polar residues. Residues K1058 and K1083 each participate in a glycyl lysine isopeptide (Lys-Gly) (interchain with G-Cter in SUMO2) cross-link. Disordered regions lie at residues 1073–1132 (KKRA…EKMR) and 1178–1217 (RPGT…DKVD). Positions 1120-1132 (SCHDGYQHQEKMR) are enriched in basic and acidic residues. Phosphoserine is present on residues S1211, S1230, S1231, and S1239. Residues 1256-1286 (TSDKKKKTEALQVATTSPTANTTGTATTSST) form a disordered region. Residues 1269-1286 (ATTSPTANTTGTATTSST) show a composition bias toward low complexity. Phosphothreonine is present on T1341. S1348 bears the Phosphoserine mark. Positions 1441–1532 (VCSKKPRNKP…SSDDEEFEPP (92 aa)) are disordered. Positions 1449–1478 (KPSQTIRTVQAKPSSSSKTSDPLASKTTTT) are enriched in polar residues. Over residues 1492 to 1508 (VKAEPPPKKRKKWKEEF) the composition is skewed to basic and acidic residues.

As to quaternary structure, interacts with TET1.

The protein localises to the chromosome. Its function is as follows. Plays an essential role in the protection and maintenance of transcriptional and developmental programs. Protects many bivalent promoters and poised enhancers from hypermethylation, showing a marked preference for these regulatory elements over other types of promoters or enhancers. Mechanistically, cooperates with TET1 and binds to DNA in a common complex to inhibit the binding of DNMT3A/3B and therefore de novo methylation. This is Glutamine and serine-rich protein 1 (QSER1) from Homo sapiens (Human).